Consider the following 1071-residue polypeptide: DNA-directed RNA polymerase subunit beta (1071 aa).

The protein belongs to the RNA polymerase beta chain family. In terms of assembly, in plastids the minimal PEP RNA polymerase catalytic core is composed of four subunits: alpha, beta, beta', and beta''. When a (nuclear-encoded) sigma factor is associated with the core the holoenzyme is formed, which can initiate transcription.

It localises to the plastid. Its subcellular location is the chloroplast. It carries out the reaction RNA(n) + a ribonucleoside 5'-triphosphate = RNA(n+1) + diphosphate. DNA-dependent RNA polymerase catalyzes the transcription of DNA into RNA using the four ribonucleoside triphosphates as substrates. The protein is DNA-directed RNA polymerase subunit beta of Acorus gramineus (Dwarf sweet flag).